We begin with the raw amino-acid sequence, 179 residues long: Enhancer of split m8 protein (179 aa).

A bHLH domain is found at Tyr10–Gln65. One can recognise an Orange domain in the interval Phe83–Leu116. Positions Asp146–Trp179 are disordered. Positions Trp176 to Trp179 match the WRPW motif motif.

Homodimer. Heterodimers with dpn. Transcription repression requires formation of a complex with a corepressor protein (Groucho).

It is found in the nucleus. Functionally, participates in the control of cell fate choice by uncommitted neuroectodermal cells in the embryo. Transcriptional repressor. Binds DNA on N-box motifs: 5'-CACNAG-3'. Part of the Notch signaling pathway. The sequence is that of Enhancer of split m8 protein from Drosophila melanogaster (Fruit fly).